We begin with the raw amino-acid sequence, 100 residues long: Large ribosomal subunit protein bL28 (100 aa).

The protein belongs to the bacterial ribosomal protein bL28 family.

This is Large ribosomal subunit protein bL28 from Ehrlichia ruminantium (strain Welgevonden).